The chain runs to 581 residues: Arginine--tRNA ligase (581 aa).

The 'HIGH' region motif lies at 126–136; that stretch reads PNLAKEMHVGH.

It belongs to the class-I aminoacyl-tRNA synthetase family. Monomer.

Its subcellular location is the cytoplasm. It carries out the reaction tRNA(Arg) + L-arginine + ATP = L-arginyl-tRNA(Arg) + AMP + diphosphate. This is Arginine--tRNA ligase from Shewanella halifaxensis (strain HAW-EB4).